A 300-amino-acid chain; its full sequence is uncharacterized protein (300 aa).

It belongs to the chlamydial CPn_0593/CT_474/TC_0759 family.

This is an uncharacterized protein from Chlamydia muridarum (strain MoPn / Nigg).